Here is a 361-residue protein sequence, read N- to C-terminus: MWVLTPAAFAGKLLSVFRQPLSSLWRSLVPLFCWLRATFWLLATKRRKQQLVLRGPDETKEEEEDPPLPTTPTSVNYHFTRQCNYKCGFCFHTAKTSFVLPLEEAKRGLLLLKEAGMEKINFSGGEPFLQDRGEYLGKLVRFCKVELRLPSVSIVSNGSLIRERWFQNYGEYLDILAISCDSFDEEVNVLIGRGQGKKNHVENLQKLRRWCRDYRVAFKINSVINRFNVEEDMTEQIKALNPVRWKVFQCLLIEGENCGEDALREAERFVIGDEEFERFLERHKEVSCLVPESNQKMKDSYLILDEYMRFLNCRKGRKDPSKSILDVGVEEAIKFSGFDEKMFLKRGGKYIWSKADLKLDW.

Residues 69 to 289 (PTTPTSVNYH…LERHKEVSCL (221 aa)) form the Radical SAM core domain. [4Fe-4S] cluster contacts are provided by C83, C87, and C90. An N6-acetyllysine modification is found at K197. K206 participates in a covalent cross-link: Glycyl lysine isopeptide (Lys-Gly) (interchain with G-Cter in ubiquitin).

The protein belongs to the radical SAM superfamily. RSAD2 family. In terms of assembly, homodimer. Interacts with IRAK1 and TRAF6. Interacts with FPPS. Interacts with HADHB. Interacts (via C-terminus) with VAPA/VAP33 (via C-terminus). (Microbial infection) Interacts with human cytomegalovirus/HHV-5 protein vMIA/UL37; this interaction results in RSAD2/viperin relocalization from the endoplasmic reticulum to the mitochondria. As to quaternary structure, (Microbial infection) Interacts (via N-terminus) with enterovirus A71 protein 2C; this interaction inhibits viral replication. In terms of assembly, (Microbial infection) Interacts with herpes simplex virus 1/HHV-1 glycoprotein D; this interaction inhibits HHV-1 replication by facilitating IRF7-mediated IFN-beta production. The cofactor is [4Fe-4S] cluster. Post-translationally, acetylated by HAT1. HAT1-mediated acetylation of Lys-197 in turn recruits UBE4A that stimulates RSAD2 polyubiquitination leading to proteasomal degradation. In terms of processing, 'Lys-6'-linked polyubiquitination at Lys-206 leads to RSAD2 protein degradation.

The protein localises to the endoplasmic reticulum membrane. It localises to the golgi apparatus. It is found in the endoplasmic reticulum. Its subcellular location is the lipid droplet. The protein resides in the mitochondrion. The protein localises to the mitochondrion inner membrane. It localises to the mitochondrion outer membrane. It catalyses the reaction CTP + AH2 + S-adenosyl-L-methionine = 3'-deoxy-3',4'-didehydro-CTP + 5'-deoxyadenosine + L-methionine + A + H2O + H(+). IRAK1 and TRAF6 synergistically activate RSAD2 increasing its activity with CTP as substrate about 10-fold. Interferon-inducible antiviral protein which plays a major role in the cell antiviral state induced by type I and type II interferon. Catalyzes the conversion of cytidine triphosphate (CTP) to 3'-deoxy-3',4'-didehydro-CTP (ddhCTP) via a SAM-dependent radical mechanism. In turn, ddhCTP acts as a chain terminator for the RNA-dependent RNA polymerases from multiple viruses and directly inhibits viral replication. Therefore, inhibits a wide range of DNA and RNA viruses, including human cytomegalovirus (HCMV), hepatitis C virus (HCV), west Nile virus (WNV), dengue virus, sindbis virus, influenza A virus, sendai virus, vesicular stomatitis virus (VSV), zika virus, and human immunodeficiency virus (HIV-1). Also promotes TLR7 and TLR9-dependent production of IFN-beta production in plasmacytoid dendritic cells (pDCs) by facilitating 'Lys-63'-linked ubiquitination of IRAK1 by TRAF6. Plays a role in CD4+ T-cells activation and differentiation. Facilitates T-cell receptor (TCR)-mediated GATA3 activation and optimal T-helper 2 (Th2) cytokine production by modulating NFKB1 and JUNB activities. Can inhibit secretion of soluble proteins. The polypeptide is S-adenosylmethionine-dependent nucleotide dehydratase RSAD2 (Homo sapiens (Human)).